A 485-amino-acid polypeptide reads, in one-letter code: Subtilisin-like protease 1 (485 aa).

The signal sequence occupies residues 1-19; that stretch reads MGIFRFISISLAAVSAANA. Residues 20–116 constitute a propeptide that is removed on maturation; that stretch reads GHILSMGHAK…VEPDTTITIH (97 aa). One can recognise an Inhibitor I9 domain in the interval 34–116; it reads SYIVVMKDGT…VEPDTTITIH (83 aa). One can recognise a Peptidase S8 domain in the interval 126–400; that stretch reads SWGLARISSQ…NILINNGDAK (275 aa). Active-site charge relay system residues include aspartate 158 and histidine 190. Asparagine 251 is a glycosylation site (N-linked (GlcNAc...) asparagine). Serine 345 acts as the Charge relay system in catalysis. Residues 377–394 are compositionally biased toward polar residues; it reads GTSSVTNPGPGTRTNILI. The segment at 377–462 is disordered; sequence GTSSVTNPGP…HTPFPNDDFN (86 aa). Residues 409–418 are compositionally biased toward pro residues; the sequence is PSQPPKPSQP. Residues 419 to 428 show a composition bias toward low complexity; that stretch reads SKPQQPSEPQ. Residues 433 to 455 are compositionally biased toward pro residues; it reads PQEPAPGQPAPAPAPVPQHPHTP.

It belongs to the peptidase S8 family.

It localises to the secreted. Its function is as follows. Secreted subtilisin-like serine protease with keratinolytic activity that contributes to pathogenicity. The chain is Subtilisin-like protease 1 (SUB1) from Arthroderma otae (strain ATCC MYA-4605 / CBS 113480) (Microsporum canis).